A 276-amino-acid polypeptide reads, in one-letter code: Mitochondrial outer membrane protein porin 2 (276 aa).

The residue at position 76 (S76) is a Phosphoserine. T236 is modified (phosphothreonine).

Belongs to the eukaryotic mitochondrial porin (TC 1.B.8.1) family. Expressed in root tips, steles, leaves, sepals, petals, stamen and pistils.

The protein localises to the mitochondrion outer membrane. Functionally, forms a channel through the mitochondrial outer membrane that allows diffusion of small hydrophilic molecules. The channel adopts an open conformation at low or zero membrane potential and a closed conformation at potentials above 30-40 mV. The open state has a weak anion selectivity whereas the closed state is cation-selective. Involved in plant growth and development at the vegetative and reproductive stages. Is important for leaf and pollen development and mitochondrial membrane potential steady state. May be involved in ABA-mediated early seedling development and disease resistance. The polypeptide is Mitochondrial outer membrane protein porin 2 (VDAC2) (Arabidopsis thaliana (Mouse-ear cress)).